The primary structure comprises 433 residues: Glutamate-1-semialdehyde 2,1-aminomutase (433 aa).

N6-(pyridoxal phosphate)lysine is present on lysine 272.

The protein belongs to the class-III pyridoxal-phosphate-dependent aminotransferase family. HemL subfamily. In terms of assembly, homodimer. Pyridoxal 5'-phosphate serves as cofactor.

The protein resides in the cytoplasm. The enzyme catalyses (S)-4-amino-5-oxopentanoate = 5-aminolevulinate. It participates in porphyrin-containing compound metabolism; protoporphyrin-IX biosynthesis; 5-aminolevulinate from L-glutamyl-tRNA(Glu): step 2/2. This Methylacidiphilum infernorum (isolate V4) (Methylokorus infernorum (strain V4)) protein is Glutamate-1-semialdehyde 2,1-aminomutase.